Consider the following 89-residue polypeptide: Large ribosomal subunit protein eL34 (89 aa).

The disordered stretch occupies residues 1 to 32 (MPAPRFKSGSFKKISKRGPGNKTLTHHRRSKV).

The protein belongs to the eukaryotic ribosomal protein eL34 family.

The protein is Large ribosomal subunit protein eL34 of Methanococcus aeolicus (strain ATCC BAA-1280 / DSM 17508 / OCM 812 / Nankai-3).